A 1213-amino-acid polypeptide reads, in one-letter code: DNA-directed RNA polymerase subunit beta' (1213 aa).

Positions 60, 62, 75, and 78 each coordinate Zn(2+). Mg(2+) is bound by residues aspartate 450, aspartate 452, and aspartate 454. Zn(2+)-binding residues include cysteine 819, cysteine 893, cysteine 900, and cysteine 903.

Belongs to the RNA polymerase beta' chain family. The RNAP catalytic core consists of 2 alpha, 1 beta, 1 beta' and 1 omega subunit. When a sigma factor is associated with the core the holoenzyme is formed, which can initiate transcription. It depends on Mg(2+) as a cofactor. Requires Zn(2+) as cofactor.

The catalysed reaction is RNA(n) + a ribonucleoside 5'-triphosphate = RNA(n+1) + diphosphate. DNA-dependent RNA polymerase catalyzes the transcription of DNA into RNA using the four ribonucleoside triphosphates as substrates. The chain is DNA-directed RNA polymerase subunit beta' from Streptococcus pyogenes serotype M28 (strain MGAS6180).